Here is a 684-residue protein sequence, read N- to C-terminus: Glycine--tRNA ligase beta subunit (684 aa).

This sequence belongs to the class-II aminoacyl-tRNA synthetase family. In terms of assembly, tetramer of two alpha and two beta subunits.

The protein localises to the cytoplasm. It carries out the reaction tRNA(Gly) + glycine + ATP = glycyl-tRNA(Gly) + AMP + diphosphate. This is Glycine--tRNA ligase beta subunit from Pseudomonas fluorescens (strain Pf0-1).